Reading from the N-terminus, the 232-residue chain is 5'-methylthioadenosine/S-adenosylhomocysteine nucleosidase (232 aa).

Catalysis depends on Glu12, which acts as the Proton acceptor. Substrate-binding positions include Gly78, Val152, and 173 to 174 (ME). Residue Asp197 is the Proton donor of the active site.

The protein belongs to the PNP/UDP phosphorylase family. MtnN subfamily. In terms of assembly, homodimer.

The enzyme catalyses S-adenosyl-L-homocysteine + H2O = S-(5-deoxy-D-ribos-5-yl)-L-homocysteine + adenine. It carries out the reaction S-methyl-5'-thioadenosine + H2O = 5-(methylsulfanyl)-D-ribose + adenine. The catalysed reaction is 5'-deoxyadenosine + H2O = 5-deoxy-D-ribose + adenine. It functions in the pathway amino-acid biosynthesis; L-methionine biosynthesis via salvage pathway; S-methyl-5-thio-alpha-D-ribose 1-phosphate from S-methyl-5'-thioadenosine (hydrolase route): step 1/2. Functionally, catalyzes the irreversible cleavage of the glycosidic bond in both 5'-methylthioadenosine (MTA) and S-adenosylhomocysteine (SAH/AdoHcy) to adenine and the corresponding thioribose, 5'-methylthioribose and S-ribosylhomocysteine, respectively. Also cleaves 5'-deoxyadenosine, a toxic by-product of radical S-adenosylmethionine (SAM) enzymes, into 5-deoxyribose and adenine. Thus, is required for in vivo function of the radical SAM enzymes biotin synthase and lipoic acid synthase, that are inhibited by 5'-deoxyadenosine accumulation. The protein is 5'-methylthioadenosine/S-adenosylhomocysteine nucleosidase of Buchnera aphidicola subsp. Acyrthosiphon pisum (strain 5A).